Consider the following 749-residue polypeptide: Cytosolic phospholipase A2 (749 aa).

In terms of domain architecture, C2 spans 1–124 (MASIDPYQHI…GEKKQVPFTF (124 aa)). A phospholipid binding region spans residues 1-178 (MASIDPYQHI…LRKLLGPEKT (178 aa)). Ca(2+) contacts are provided by Asp-40, Thr-41, Asp-43, Asn-65, Asp-93, Ala-94, and Asn-95. A PLA2c domain is found at 138 to 740 (VCSSTDLRFS…NDVEARKLLH (603 aa)). Ser-229 acts as the Nucleophile in catalysis. Residues 417 to 458 (MEEEIENLKPKHILGNDSSDSDDEMQEPKGTENSKAEEEYQR) form a disordered region. Positions 442 to 457 (QEPKGTENSKAEEEYQ) are enriched in basic and acidic residues. Catalysis depends on Asp-549, which acts as the Proton acceptor.

The protein resides in the cytoplasm. Its subcellular location is the cytoplasmic vesicle. It catalyses the reaction a 1,2-diacyl-sn-glycero-3-phosphocholine + H2O = a 1-acyl-sn-glycero-3-phosphocholine + a fatty acid + H(+). It carries out the reaction a 1-acyl-sn-glycero-3-phosphocholine + H2O = sn-glycerol 3-phosphocholine + a fatty acid + H(+). Stimulated by agonists such as ATP, EGF, thrombin and bradykinin as well as by cytosolic Ca(2+). In terms of biological role, selectively hydrolyzes arachidonyl phospholipids in the sn-2 position releasing arachidonic acid. Together with its lysophospholipid activity, it is implicated in the initiation of the inflammatory response. This is Cytosolic phospholipase A2 (pla2g4a) from Xenopus tropicalis (Western clawed frog).